The chain runs to 313 residues: Cytochrome f (313 aa).

The first 31 residues, 1–31, serve as a signal peptide directing secretion; the sequence is MQNMFSFLSNKKIIALFLIIGTIFMPLSSEA. Residues tyrosine 32, cysteine 52, cysteine 55, and histidine 56 each coordinate heme. A helical membrane pass occupies residues 279–298; it reads IKWLIAFLILSTLGQVFLVL.

This sequence belongs to the cytochrome f family. The 4 large subunits of the cytochrome b6-f complex are cytochrome b6, subunit IV (17 kDa polypeptide, petD), cytochrome f and the Rieske protein, while the 4 small subunits are PetG, PetL, PetM and PetN. The complex functions as a dimer. Heme serves as cofactor.

It localises to the plastid. It is found in the chloroplast thylakoid membrane. Component of the cytochrome b6-f complex, which mediates electron transfer between photosystem II (PSII) and photosystem I (PSI), cyclic electron flow around PSI, and state transitions. The sequence is that of Cytochrome f (petA) from Mesostigma viride (Green alga).